The primary structure comprises 597 residues: MKIEDKLVASVINGLKALYGQEVPEKMVQLQKTKKEFEGHLTLVVFPFLKMSRKGPEQTAQEIGEYLKANEPAVAAFNVIKGFLNLTIASATWIELLNEIQSDEEYGLVKATETSPLVMIEYSSPNTNKPLHLGHVRNNLLGNALANIVAANGNRVVKTNIVNDRGIHICKSMLAWKKYGNGETPESTGKKGDHLVGDYYVSFDKHYKAELAELMEKGMTKEEAEAASPLMQEAREMLVKWEAGDPEVRALWEMMNNWVYAGFDETYRKMGVGFDKIYYESNTYLEGKEKVMEGLEKGFFFKKEDGSVWVDLTAEGLDHKLLLRGDGTSVYMTQDIGTAKLRFADYPIDKMIYVVGNEQNYHFQVLSILLDKLGFEWGKGLVHFSYGMVELPEGKMKSREGTVVDADDLMEEMVSTAKETSQELGKLDGLTQEEADDIARIVGLGALKYFILKVDARKNMTFNPKESIDFNGNTGPFIQYTYARIQSVLRKAAESGIVIPEQIPAGIELSEKEEGLIQLVADFAAVVKQAGEDYSPSIIANYTYDLVKEYNQFYHDFSILREENEAVKVFRIALSANVAKVVRLGMGLLGIEVPSRM.

The short motif at 125 to 135 is the 'HIGH' region element; it reads PNTNKPLHLGH.

The protein belongs to the class-I aminoacyl-tRNA synthetase family. In terms of assembly, monomer.

It is found in the cytoplasm. It carries out the reaction tRNA(Arg) + L-arginine + ATP = L-arginyl-tRNA(Arg) + AMP + diphosphate. The protein is Arginine--tRNA ligase of Bacteroides thetaiotaomicron (strain ATCC 29148 / DSM 2079 / JCM 5827 / CCUG 10774 / NCTC 10582 / VPI-5482 / E50).